The chain runs to 652 residues: Aspartate--tRNA ligase, mitochondrial (652 aa).

The transit peptide at 1 to 46 (MYLGSWLNRLGRGLSRPIGKTKQPIWGSLSRSLTLSSQRVPEFSSF) directs the protein to the mitochondrion. The residue at position 218 (T218) is a Phosphothreonine. S241 is subject to Phosphoserine. An aspartate region spans residues 243–246 (QQFK). L-aspartate is bound at residue R265. ATP contacts are provided by residues 265–267 (RDE) and E534. Position 541 (R541) interacts with L-aspartate. 583–586 (GLDR) is an ATP binding site.

Belongs to the class-II aminoacyl-tRNA synthetase family. Type 1 subfamily. Homodimer.

It localises to the mitochondrion matrix. Its subcellular location is the mitochondrion membrane. It carries out the reaction tRNA(Asp) + L-aspartate + ATP = L-aspartyl-tRNA(Asp) + AMP + diphosphate. In terms of biological role, catalyzes the attachment of aspartate to tRNA(Asp) in a two-step reaction: aspartate is first activated by ATP to form Asp-AMP and then transferred to the acceptor end of tRNA(Asp). The sequence is that of Aspartate--tRNA ligase, mitochondrial (Dars2) from Rattus norvegicus (Rat).